The chain runs to 368 residues: tRNA 2-selenouridine synthase (368 aa).

One can recognise a Rhodanese domain in the interval 15–138; it reads MLSGHPMIDV…MRQYLIEVID (124 aa). Residue Cys-98 is the S-selanylcysteine intermediate of the active site.

It belongs to the SelU family. As to quaternary structure, monomer.

The catalysed reaction is 5-methylaminomethyl-2-thiouridine(34) in tRNA + selenophosphate + (2E)-geranyl diphosphate + H2O + H(+) = 5-methylaminomethyl-2-selenouridine(34) in tRNA + (2E)-thiogeraniol + phosphate + diphosphate. The enzyme catalyses 5-methylaminomethyl-2-thiouridine(34) in tRNA + (2E)-geranyl diphosphate = 5-methylaminomethyl-S-(2E)-geranyl-thiouridine(34) in tRNA + diphosphate. It catalyses the reaction 5-methylaminomethyl-S-(2E)-geranyl-thiouridine(34) in tRNA + selenophosphate + H(+) = 5-methylaminomethyl-2-(Se-phospho)selenouridine(34) in tRNA + (2E)-thiogeraniol. It carries out the reaction 5-methylaminomethyl-2-(Se-phospho)selenouridine(34) in tRNA + H2O = 5-methylaminomethyl-2-selenouridine(34) in tRNA + phosphate. Involved in the post-transcriptional modification of the uridine at the wobble position (U34) of tRNA(Lys), tRNA(Glu) and tRNA(Gln). Catalyzes the conversion of 2-thiouridine (S2U-RNA) to 2-selenouridine (Se2U-RNA). Acts in a two-step process involving geranylation of 2-thiouridine (S2U) to S-geranyl-2-thiouridine (geS2U) and subsequent selenation of the latter derivative to 2-selenouridine (Se2U) in the tRNA chain. This Shewanella woodyi (strain ATCC 51908 / MS32) protein is tRNA 2-selenouridine synthase.